A 1358-amino-acid chain; its full sequence is Mediator of RNA polymerase II transcription subunit 12 (1358 aa).

Residues 629–654 adopt a coiled-coil conformation; it reads VRYNYEQLQIQLNTAKEQMLQEQFEH.

This sequence belongs to the Mediator complex subunit 12 family. In terms of assembly, component of the SRB8-11 complex, which itself associates with the Mediator complex.

It is found in the nucleus. Component of the SRB8-11 complex. The SRB8-11 complex is a regulatory module of the Mediator complex which is itself involved in regulation of basal and activated RNA polymerase II-dependent transcription. The SRB8-11 complex may be involved in the transcriptional repression of a subset of genes regulated by Mediator. It may inhibit the association of the Mediator complex with RNA polymerase II to form the holoenzyme complex. This Eremothecium gossypii (strain ATCC 10895 / CBS 109.51 / FGSC 9923 / NRRL Y-1056) (Yeast) protein is Mediator of RNA polymerase II transcription subunit 12 (SRB8).